We begin with the raw amino-acid sequence, 212 residues long: Uracil phosphoribosyltransferase (212 aa).

5-phospho-alpha-D-ribose 1-diphosphate contacts are provided by residues arginine 78, arginine 103, and 130–138; that span reads DPMLATGSS. Residues isoleucine 193 and 198-200 contribute to the uracil site; that span reads GDA. Aspartate 199 lines the 5-phospho-alpha-D-ribose 1-diphosphate pocket.

The protein belongs to the UPRTase family. Requires Mg(2+) as cofactor.

It catalyses the reaction UMP + diphosphate = 5-phospho-alpha-D-ribose 1-diphosphate + uracil. It participates in pyrimidine metabolism; UMP biosynthesis via salvage pathway; UMP from uracil: step 1/1. Allosterically activated by GTP. Catalyzes the conversion of uracil and 5-phospho-alpha-D-ribose 1-diphosphate (PRPP) to UMP and diphosphate. In Pseudomonas fluorescens (strain Pf0-1), this protein is Uracil phosphoribosyltransferase.